The primary structure comprises 467 residues: MTCRTRFAPSPTGYLHIGGARTALYCWLEARRRNGQFLLRIEDTDRERSTQAAIDAILHAMDWLGLDYDAPPVYQTQRIERYNQVAARLLAEGKAYYAYDSKDTLNAMREAALRTGEKPRYNGAAREANLPYRDDPNRVIRFKNPHTGTVAFDDLIKGRIQIANSELDDMVILRPDGYPTYNFAVVVDDWDMNITEVIRGDDHINNTPRQINLYHALGAPLPTFAHLPMILDEQGAKLSKRTGAADVMQYRDAGYLPHALINYLVRLGWSHGDQELFNRQALIDLFQINDVNSKAARLDMAKLGWVNQHYLKTDDPATLAPPLVWHLEQRGIDVSAGPAPTDVILALRERVQTLKEMAEKAEIWYCPLQRYDEIAVAKHLKPGADTALLHARTLLAALPTWTVDNVDTALRTTATTLEIGMGKVAQPLRVAITGTQVSPDIAYTVYLTGRNEALKRIDAALIKISTA.

A 'HIGH' region motif is present at residues 9–19 (PSPTGYLHIGG). A 'KMSKS' region motif is present at residues 237-241 (KLSKR). An ATP-binding site is contributed by lysine 240.

Belongs to the class-I aminoacyl-tRNA synthetase family. Glutamate--tRNA ligase type 1 subfamily. In terms of assembly, monomer.

It localises to the cytoplasm. The catalysed reaction is tRNA(Glu) + L-glutamate + ATP = L-glutamyl-tRNA(Glu) + AMP + diphosphate. Functionally, catalyzes the attachment of glutamate to tRNA(Glu) in a two-step reaction: glutamate is first activated by ATP to form Glu-AMP and then transferred to the acceptor end of tRNA(Glu). The protein is Glutamate--tRNA ligase of Xylella fastidiosa (strain 9a5c).